Here is a 212-residue protein sequence, read N- to C-terminus: Phosphatidylserine decarboxylase proenzyme (212 aa).

Serine 182 (schiff-base intermediate with substrate; via pyruvic acid) is an active-site residue. At serine 182 the chain carries Pyruvic acid (Ser); by autocatalysis.

It belongs to the phosphatidylserine decarboxylase family. PSD-A subfamily. In terms of assembly, heterodimer of a large membrane-associated beta subunit and a small pyruvoyl-containing alpha subunit. Pyruvate is required as a cofactor. Is synthesized initially as an inactive proenzyme. Formation of the active enzyme involves a self-maturation process in which the active site pyruvoyl group is generated from an internal serine residue via an autocatalytic post-translational modification. Two non-identical subunits are generated from the proenzyme in this reaction, and the pyruvate is formed at the N-terminus of the alpha chain, which is derived from the carboxyl end of the proenzyme. The post-translation cleavage follows an unusual pathway, termed non-hydrolytic serinolysis, in which the side chain hydroxyl group of the serine supplies its oxygen atom to form the C-terminus of the beta chain, while the remainder of the serine residue undergoes an oxidative deamination to produce ammonia and the pyruvoyl prosthetic group on the alpha chain.

It localises to the cell membrane. The catalysed reaction is a 1,2-diacyl-sn-glycero-3-phospho-L-serine + H(+) = a 1,2-diacyl-sn-glycero-3-phosphoethanolamine + CO2. The protein operates within phospholipid metabolism; phosphatidylethanolamine biosynthesis; phosphatidylethanolamine from CDP-diacylglycerol: step 2/2. In terms of biological role, catalyzes the formation of phosphatidylethanolamine (PtdEtn) from phosphatidylserine (PtdSer). The polypeptide is Phosphatidylserine decarboxylase proenzyme (Paraburkholderia xenovorans (strain LB400)).